Reading from the N-terminus, the 526-residue chain is Chaperonin GroEL, chloroplastic (526 aa).

ATP contacts are provided by residues 29–32 (TLGP), 86–90 (DGTTT), G412, 476–478 (DAA), and D492.

It belongs to the chaperonin (HSP60) family. In terms of assembly, forms a cylinder of 14 subunits composed of two heptameric rings stacked back-to-back. Interacts with the co-chaperonin GroES.

Its subcellular location is the plastid. The protein localises to the chloroplast. It carries out the reaction ATP + H2O + a folded polypeptide = ADP + phosphate + an unfolded polypeptide.. In terms of biological role, together with its co-chaperonin GroES, plays an essential role in assisting protein folding. The GroEL-GroES system forms a nano-cage that allows encapsulation of the non-native substrate proteins and provides a physical environment optimized to promote and accelerate protein folding. The protein is Chaperonin GroEL, chloroplastic of Cyanidioschyzon merolae (strain NIES-3377 / 10D) (Unicellular red alga).